The chain runs to 173 residues: Rubredoxin-2 (173 aa).

Rubredoxin-like domains lie at 2-53 (ASYK…FMLI) and 119-170 (YLKW…YVLY). 8 residues coordinate Fe cation: C6, C9, C39, C42, C124, C127, C157, and C160.

This sequence belongs to the rubredoxin family. Fe(3+) is required as a cofactor.

It is found in the cytoplasm. It participates in hydrocarbon metabolism; alkane degradation. Involved in the hydrocarbon hydroxylating system, which transfers electrons from NADH to rubredoxin reductase and then through rubredoxin to alkane 1 monooxygenase. The sequence is that of Rubredoxin-2 (alkG) from Ectopseudomonas oleovorans (Pseudomonas oleovorans).